A 653-amino-acid chain; its full sequence is DNA mismatch repair protein MutL (653 aa).

Positions 368-413 are disordered; sequence EVSQVAEPEGKTDITNKKETETKEKAEKKENKQEEKEEKTSAPEYV. A compositionally biased stretch (basic and acidic residues) spans 375–408; sequence PEGKTDITNKKETETKEKAEKKENKQEEKEEKTS.

Belongs to the DNA mismatch repair MutL/HexB family.

Its function is as follows. This protein is involved in the repair of mismatches in DNA. It is required for dam-dependent methyl-directed DNA mismatch repair. May act as a 'molecular matchmaker', a protein that promotes the formation of a stable complex between two or more DNA-binding proteins in an ATP-dependent manner without itself being part of a final effector complex. This Lactobacillus delbrueckii subsp. bulgaricus (strain ATCC 11842 / DSM 20081 / BCRC 10696 / JCM 1002 / NBRC 13953 / NCIMB 11778 / NCTC 12712 / WDCM 00102 / Lb 14) protein is DNA mismatch repair protein MutL.